We begin with the raw amino-acid sequence, 248 residues long: tRNA pseudouridine synthase A (248 aa).

The Nucleophile role is filled by D53. Y111 is a binding site for substrate.

It belongs to the tRNA pseudouridine synthase TruA family. As to quaternary structure, homodimer.

It catalyses the reaction uridine(38/39/40) in tRNA = pseudouridine(38/39/40) in tRNA. Functionally, formation of pseudouridine at positions 38, 39 and 40 in the anticodon stem and loop of transfer RNAs. The protein is tRNA pseudouridine synthase A of Streptococcus thermophilus (strain ATCC BAA-491 / LMD-9).